The sequence spans 322 residues: Elongation factor Ts, mitochondrial (322 aa).

The protein belongs to the EF-Ts family.

It localises to the mitochondrion. In terms of biological role, associates with the EF-Tu.GDP complex and induces the exchange of GDP to GTP. It remains bound to the aminoacyl-tRNA.EF-Tu.GTP complex up to the GTP hydrolysis stage on the ribosome. The protein is Elongation factor Ts, mitochondrial of Chlamydomonas reinhardtii (Chlamydomonas smithii).